Consider the following 187-residue polypeptide: Large ribosomal subunit protein uL5 (187 aa).

This sequence belongs to the universal ribosomal protein uL5 family. As to quaternary structure, part of the 50S ribosomal subunit; part of the 5S rRNA/L5/L18/L25 subcomplex. Contacts the 5S rRNA and the P site tRNA. Forms a bridge to the 30S subunit in the 70S ribosome.

In terms of biological role, this is one of the proteins that bind and probably mediate the attachment of the 5S RNA into the large ribosomal subunit, where it forms part of the central protuberance. In the 70S ribosome it contacts protein S13 of the 30S subunit (bridge B1b), connecting the 2 subunits; this bridge is implicated in subunit movement. Contacts the P site tRNA; the 5S rRNA and some of its associated proteins might help stabilize positioning of ribosome-bound tRNAs. The sequence is that of Large ribosomal subunit protein uL5 from Dinoroseobacter shibae (strain DSM 16493 / NCIMB 14021 / DFL 12).